Here is a 407-residue protein sequence, read N- to C-terminus: Cytochrome P450 NovI (407 aa).

Residue C357 coordinates heme.

The protein belongs to the cytochrome P450 family. Heme serves as cofactor.

It functions in the pathway antibiotic biosynthesis; novobiocin biosynthesis. Functionally, together with NovH, involved in the formation of a beta-OH-Tyr intermediate in the novobiocin biosynthesis pathway, an aminocoumarin family antibiotic that targets bacterial DNA gyrases. Acts as a cytochrome P450-type monooxygenase with specificity for the tyrosyl-S-NovH acyl enzyme (L-Tyr-S-NovH) to form the beta-OH-Tyr intermediate (L-beta-OH-Tyr-S-NovH). The protein is Cytochrome P450 NovI (novI) of Streptomyces niveus (Streptomyces spheroides).